We begin with the raw amino-acid sequence, 302 residues long: Alpha-ketoglutarate-dependent dioxygenase alkB homolog 4 (302 aa).

Alanine 2 is subject to N-acetylalanine. At threonine 8 the chain carries Phosphothreonine. The 125-residue stretch at 150–274 folds into the Fe2OG dioxygenase domain; it reads PVEQCNLDYC…RVCVTFRELS (125 aa). Residues histidine 169, aspartate 171, and histidine 254 each contribute to the Fe cation site. Arginine 265 serves as a coordination point for 2-oxoglutarate.

The protein belongs to the alkB family. As to quaternary structure, interacts with ZFHX3, MLLT3, MLLT1, HSF4, EP300, TES, EIF3C, MTMR6 and PSMA6. It depends on Fe(2+) as a cofactor. As to expression, widely expressed, with highest expression in pancreas, ovary and spleen.

It localises to the cytoplasm. It is found in the nucleus. The protein localises to the nucleolus. Its subcellular location is the midbody. It catalyses the reaction an N(6)-methyl-2'-deoxyadenosine in DNA + 2-oxoglutarate + O2 = a 2'-deoxyadenosine in DNA + formaldehyde + succinate + CO2. The catalysed reaction is N(6)-methyl-L-lysyl-[protein] + 2-oxoglutarate + O2 = L-lysyl-[protein] + formaldehyde + succinate + CO2. Functionally, dioxygenase that mediates demethylation of actin monomethylated at 'Lys-84' (K84me1), thereby acting as a regulator of actomyosin-processes. Demethylation of actin K84me1 is required for maintaining actomyosin dynamics supporting normal cleavage furrow ingression during cytokinesis and cell migration. In addition to proteins, also demethylates DNA: specifically demethylates DNA methylated on the 6th position of adenine (N(6)-methyladenosine) DNA, thereby regulating Polycomb silencing. This Homo sapiens (Human) protein is Alpha-ketoglutarate-dependent dioxygenase alkB homolog 4.